Here is a 98-residue protein sequence, read N- to C-terminus: Cell division topological specificity factor (98 aa).

This sequence belongs to the MinE family.

Its function is as follows. Prevents the cell division inhibition by proteins MinC and MinD at internal division sites while permitting inhibition at polar sites. This ensures cell division at the proper site by restricting the formation of a division septum at the midpoint of the long axis of the cell. The sequence is that of Cell division topological specificity factor from Methylorubrum populi (strain ATCC BAA-705 / NCIMB 13946 / BJ001) (Methylobacterium populi).